The primary structure comprises 337 residues: 3-isopropylmalate dehydrogenase (337 aa).

The substrate site is built by R86, R96, R117, and D201. The Mg(2+) site is built by D201, D225, and D229. 258 to 270 (GAAFDIAGKNIGN) serves as a coordination point for NAD(+).

It belongs to the isocitrate and isopropylmalate dehydrogenases family. Homotetramer. Mg(2+) serves as cofactor. Requires Mn(2+) as cofactor.

It is found in the cytoplasm. It carries out the reaction (2R,3S)-3-isopropylmalate + NAD(+) = 4-methyl-2-oxopentanoate + CO2 + NADH. It functions in the pathway amino-acid biosynthesis; L-leucine biosynthesis; L-leucine from 3-methyl-2-oxobutanoate: step 3/4. In terms of biological role, catalyzes the oxidation of 3-carboxy-2-hydroxy-4-methylpentanoate (3-isopropylmalate) to 3-carboxy-4-methyl-2-oxopentanoate. The product decarboxylates to 4-methyl-2 oxopentanoate. The polypeptide is 3-isopropylmalate dehydrogenase (leuB) (Sulfurisphaera tokodaii (strain DSM 16993 / JCM 10545 / NBRC 100140 / 7) (Sulfolobus tokodaii)).